Reading from the N-terminus, the 202-residue chain is Translation initiation factor IF-3 (202 aa).

The protein belongs to the IF-3 family. As to quaternary structure, monomer.

Its subcellular location is the cytoplasm. IF-3 binds to the 30S ribosomal subunit and shifts the equilibrium between 70S ribosomes and their 50S and 30S subunits in favor of the free subunits, thus enhancing the availability of 30S subunits on which protein synthesis initiation begins. The protein is Translation initiation factor IF-3 of Prochlorococcus marinus (strain MIT 9211).